The chain runs to 837 residues: Translation initiation factor IF-2 (837 aa).

The span at 97-139 (AEEIEAEQRRELEEQRAAEEAARLKAEQEARERAEEEARRQAE) shows a compositional bias: basic and acidic residues. The segment at 97-253 (AEEIEAEQRR…QHGFQSPTGP (157 aa)) is disordered. Residues 140-175 (AAKAQTAETAAPAAAESASSAEPAQVVAAVEAAAPA) show a composition bias toward low complexity. A compositionally biased stretch (basic and acidic residues) spans 176–197 (PERKKEEPRRVEKPRSDDDERR). A compositionally biased stretch (basic residues) spans 198–208 (DRKHAQHRPSL). Residues 219–229 (RSGEDEADGFR) show a composition bias toward basic and acidic residues. The segment covering 230–244 (RGGRGGKSKLKKRNQ) has biased composition (basic residues). Positions 337–504 (ARAPVVTVMG…AVLLQAEILE (168 aa)) constitute a tr-type G domain. The interval 346–353 (GHVDHGKT) is G1. 346 to 353 (GHVDHGKT) contacts GTP. A G2 region spans residues 371 to 375 (GITQH). The G3 stretch occupies residues 392–395 (DTPG). GTP-binding positions include 392 to 396 (DTPGH) and 446 to 449 (NKID). Positions 446-449 (NKID) are G4. A G5 region spans residues 482-484 (SAK).

It belongs to the TRAFAC class translation factor GTPase superfamily. Classic translation factor GTPase family. IF-2 subfamily.

It is found in the cytoplasm. Its function is as follows. One of the essential components for the initiation of protein synthesis. Protects formylmethionyl-tRNA from spontaneous hydrolysis and promotes its binding to the 30S ribosomal subunits. Also involved in the hydrolysis of GTP during the formation of the 70S ribosomal complex. This is Translation initiation factor IF-2 from Stutzerimonas stutzeri (strain A1501) (Pseudomonas stutzeri).